Here is a 233-residue protein sequence, read N- to C-terminus: Large ribosomal subunit protein uL1 (233 aa).

Belongs to the universal ribosomal protein uL1 family. As to quaternary structure, part of the 50S ribosomal subunit.

Binds directly to 23S rRNA. The L1 stalk is quite mobile in the ribosome, and is involved in E site tRNA release. In terms of biological role, protein L1 is also a translational repressor protein, it controls the translation of the L11 operon by binding to its mRNA. The chain is Large ribosomal subunit protein uL1 from Marinomonas sp. (strain MWYL1).